The following is a 214-amino-acid chain: Probable transaldolase (214 aa).

Lys-83 serves as the catalytic Schiff-base intermediate with substrate.

It belongs to the transaldolase family. Type 3B subfamily.

The protein localises to the cytoplasm. The enzyme catalyses D-sedoheptulose 7-phosphate + D-glyceraldehyde 3-phosphate = D-erythrose 4-phosphate + beta-D-fructose 6-phosphate. Its pathway is carbohydrate degradation; pentose phosphate pathway; D-glyceraldehyde 3-phosphate and beta-D-fructose 6-phosphate from D-ribose 5-phosphate and D-xylulose 5-phosphate (non-oxidative stage): step 2/3. Transaldolase is important for the balance of metabolites in the pentose-phosphate pathway. This is Probable transaldolase from Carboxydothermus hydrogenoformans (strain ATCC BAA-161 / DSM 6008 / Z-2901).